The sequence spans 155 residues: Pathogenesis-related protein 2 (155 aa).

It belongs to the BetVI family.

This is Pathogenesis-related protein 2 from Phaseolus vulgaris (Kidney bean).